The chain runs to 377 residues: Spermidine/putrescine import ATP-binding protein PotA (377 aa).

Residues isoleucine 18–isoleucine 248 form the ABC transporter domain. Position 50-57 (glycine 50–threonine 57) interacts with ATP.

The protein belongs to the ABC transporter superfamily. Spermidine/putrescine importer (TC 3.A.1.11.1) family. In terms of assembly, the complex is composed of two ATP-binding proteins (PotA), two transmembrane proteins (PotB and PotC) and a solute-binding protein (PotD).

It localises to the cell inner membrane. It catalyses the reaction ATP + H2O + polyamine-[polyamine-binding protein]Side 1 = ADP + phosphate + polyamineSide 2 + [polyamine-binding protein]Side 1.. Functionally, part of the ABC transporter complex PotABCD involved in spermidine/putrescine import. Responsible for energy coupling to the transport system. In Vibrio parahaemolyticus serotype O3:K6 (strain RIMD 2210633), this protein is Spermidine/putrescine import ATP-binding protein PotA.